The primary structure comprises 95 residues: Co-chaperonin GroES (95 aa).

It belongs to the GroES chaperonin family. Heptamer of 7 subunits arranged in a ring. Interacts with the chaperonin GroEL.

The protein localises to the cytoplasm. Functionally, together with the chaperonin GroEL, plays an essential role in assisting protein folding. The GroEL-GroES system forms a nano-cage that allows encapsulation of the non-native substrate proteins and provides a physical environment optimized to promote and accelerate protein folding. GroES binds to the apical surface of the GroEL ring, thereby capping the opening of the GroEL channel. The protein is Co-chaperonin GroES of Clostridium acetobutylicum (strain ATCC 824 / DSM 792 / JCM 1419 / IAM 19013 / LMG 5710 / NBRC 13948 / NRRL B-527 / VKM B-1787 / 2291 / W).